The following is a 341-amino-acid chain: MINLDVWIDLTNAPHVHYFCQLIKKFEKEGIEYLLTFRDSGNLAKLVEIYNFVGKCIGKHGNTLKDKLIFYAERVIGLTELISNVKPKVAIAKHSVELPRVAFGLNIPVIFVVDNEHAEAQNKLTLPLADEIIKPIATDENKLKEFGGRNFISFEGTCEVANVNSRLKGYYPIDNEILKKLGICDDNPTIVMRPCPNSSYCNGHKDILPKIIEKLQKRIDCNIVVFPRDEHQKEIYREVNAIVPKETIDALSLLYNSDFMIGAGGTMNRESAILGIPTVSCYPQELLGVDKYLIEKDRMIHTNDIKEIINYVEDNLGKRMGVIELEDPTDLMFERVCNYLK.

This is an uncharacterized protein from Methanocaldococcus jannaschii (strain ATCC 43067 / DSM 2661 / JAL-1 / JCM 10045 / NBRC 100440) (Methanococcus jannaschii).